The primary structure comprises 119 residues: NADH-quinone oxidoreductase subunit A (119 aa).

Helical transmembrane passes span 7–27, 63–83, and 88–108; these read FPVL…MFLG, LIAI…PWGV, and IGWF…VGFV.

Belongs to the complex I subunit 3 family. In terms of assembly, NDH-1 is composed of 14 different subunits. Subunits NuoA, H, J, K, L, M, N constitute the membrane sector of the complex.

The protein localises to the cell membrane. The catalysed reaction is a quinone + NADH + 5 H(+)(in) = a quinol + NAD(+) + 4 H(+)(out). Functionally, NDH-1 shuttles electrons from NADH, via FMN and iron-sulfur (Fe-S) centers, to quinones in the respiratory chain. The immediate electron acceptor for the enzyme in this species is believed to be ubiquinone. Couples the redox reaction to proton translocation (for every two electrons transferred, four hydrogen ions are translocated across the cytoplasmic membrane), and thus conserves the redox energy in a proton gradient. The chain is NADH-quinone oxidoreductase subunit A from Polynucleobacter asymbioticus (strain DSM 18221 / CIP 109841 / QLW-P1DMWA-1) (Polynucleobacter necessarius subsp. asymbioticus).